Consider the following 325-residue polypeptide: Elongation factor P--(R)-beta-lysine ligase (325 aa).

76–78 (SPE) contacts substrate. ATP contacts are provided by residues 100–102 (RNE) and Asn109. Residue Tyr118 participates in substrate binding. Position 244–245 (244–245 (EL)) interacts with ATP. Glu251 contacts substrate. ATP is bound at residue Gly300.

Belongs to the class-II aminoacyl-tRNA synthetase family. EpmA subfamily. In terms of assembly, homodimer.

It catalyses the reaction D-beta-lysine + L-lysyl-[protein] + ATP = N(6)-((3R)-3,6-diaminohexanoyl)-L-lysyl-[protein] + AMP + diphosphate + H(+). Its function is as follows. With EpmB is involved in the beta-lysylation step of the post-translational modification of translation elongation factor P (EF-P). Catalyzes the ATP-dependent activation of (R)-beta-lysine produced by EpmB, forming a lysyl-adenylate, from which the beta-lysyl moiety is then transferred to the epsilon-amino group of a conserved specific lysine residue in EF-P. This is Elongation factor P--(R)-beta-lysine ligase from Klebsiella pneumoniae subsp. pneumoniae (strain ATCC 700721 / MGH 78578).